A 335-amino-acid chain; its full sequence is 4-hydroxythreonine-4-phosphate dehydrogenase (335 aa).

2 residues coordinate substrate: His-135 and Thr-136. Residues His-165, His-210, and His-265 each coordinate a divalent metal cation. Lys-273, Asn-282, and Arg-291 together coordinate substrate.

It belongs to the PdxA family. Homodimer. Zn(2+) is required as a cofactor. The cofactor is Mg(2+). Requires Co(2+) as cofactor.

The protein localises to the cytoplasm. The enzyme catalyses 4-(phosphooxy)-L-threonine + NAD(+) = 3-amino-2-oxopropyl phosphate + CO2 + NADH. The protein operates within cofactor biosynthesis; pyridoxine 5'-phosphate biosynthesis; pyridoxine 5'-phosphate from D-erythrose 4-phosphate: step 4/5. Catalyzes the NAD(P)-dependent oxidation of 4-(phosphooxy)-L-threonine (HTP) into 2-amino-3-oxo-4-(phosphooxy)butyric acid which spontaneously decarboxylates to form 3-amino-2-oxopropyl phosphate (AHAP). The chain is 4-hydroxythreonine-4-phosphate dehydrogenase from Saccharophagus degradans (strain 2-40 / ATCC 43961 / DSM 17024).